The chain runs to 320 residues: tRNA N6-adenosine threonylcarbamoyltransferase (320 aa).

Fe cation is bound by residues H113 and H117. Residues 143-147, D176, G189, D193, and N281 contribute to the substrate site; that span reads VVSGG. A Fe cation-binding site is contributed by D305.

Belongs to the KAE1 / TsaD family. Fe(2+) serves as cofactor.

Its subcellular location is the cytoplasm. The catalysed reaction is L-threonylcarbamoyladenylate + adenosine(37) in tRNA = N(6)-L-threonylcarbamoyladenosine(37) in tRNA + AMP + H(+). In terms of biological role, required for the formation of a threonylcarbamoyl group on adenosine at position 37 (t(6)A37) in tRNAs that read codons beginning with adenine. Is involved in the transfer of the threonylcarbamoyl moiety of threonylcarbamoyl-AMP (TC-AMP) to the N6 group of A37, together with TsaE and TsaB. TsaD likely plays a direct catalytic role in this reaction. In Mycoplasmoides gallisepticum (strain R(low / passage 15 / clone 2)) (Mycoplasma gallisepticum), this protein is tRNA N6-adenosine threonylcarbamoyltransferase.